A 408-amino-acid polypeptide reads, in one-letter code: Argininosuccinate synthase (408 aa).

ATP contacts are provided by residues 9–17 (AYSGGLDTS) and Ala36. Tyr87 and Ser92 together coordinate L-citrulline. Gly117 lines the ATP pocket. L-aspartate contacts are provided by Thr119, Asn123, and Asp124. Asn123 contributes to the L-citrulline binding site. L-citrulline is bound by residues Arg127, Ser176, Ser185, Glu261, and Tyr273.

It belongs to the argininosuccinate synthase family. Type 1 subfamily. In terms of assembly, homotetramer.

It localises to the cytoplasm. It carries out the reaction L-citrulline + L-aspartate + ATP = 2-(N(omega)-L-arginino)succinate + AMP + diphosphate + H(+). It functions in the pathway amino-acid biosynthesis; L-arginine biosynthesis; L-arginine from L-ornithine and carbamoyl phosphate: step 2/3. This is Argininosuccinate synthase from Deinococcus deserti (strain DSM 17065 / CIP 109153 / LMG 22923 / VCD115).